The sequence spans 446 residues: Phosphoglucosamine mutase (446 aa).

Ser-99 acts as the Phosphoserine intermediate in catalysis. Ser-99, Asp-242, Asp-244, and Asp-246 together coordinate Mg(2+). Ser-99 carries the post-translational modification Phosphoserine.

This sequence belongs to the phosphohexose mutase family. Mg(2+) serves as cofactor. Post-translationally, activated by phosphorylation.

The catalysed reaction is alpha-D-glucosamine 1-phosphate = D-glucosamine 6-phosphate. In terms of biological role, catalyzes the conversion of glucosamine-6-phosphate to glucosamine-1-phosphate. The chain is Phosphoglucosamine mutase from Campylobacter curvus (strain 525.92).